The sequence spans 338 residues: Trans-enoyl reductase fsr4 (338 aa).

65–68 (KDWK) is an NADP(+) binding site. 147-153 (AAFTAAC) contacts substrate. Residues 182–185 (SSAV), 205–208 (AGRA), Y227, and 277–278 (II) contribute to the NADP(+) site.

It belongs to the zinc-containing alcohol dehydrogenase family.

Its function is as follows. Trans-enoyl reductase; part of the gene cluster that mediates the biosynthesis of fusarubins, highly pigmented naphthoquinones responsible for the coloration of the fruiting bodies. The non-reducing polyketide synthase FSR1 is responsible for the condensation of seven acetyl-CoA units to yield a haptaketide. After rings A and B are formed by aldol-type cyclization, the PKS-derived product is released as 6-O-demethylfusarubinaldehyde. Then, two hydroxyl groups at C-5 and C-10 are incorporated by FSR3, and simultaneously hydroxyl groups at C-6 and C-8 are methylated by FSR2. The aldehyde is, on the one hand, reduced by FSR3 to 8-O-methylfusarubin alcohol, which equilibrates mainly with 8-O-methylfusarubin and only small amounts of 8-O-methylnectriafurone. On the other hand, the aldehyde can be oxidized to form 8-O-methylfusarubinic acid, a reaction driven by FSR3 equilibrating with 8-O-methylfusarubinlactone, finally resulting in 8-O-methylanhydrofusarubinlactol after a further reduction step and loss of water. 8-O-Methylfusarubinic acid can also undergo decarboxylation, resulting in 8-O-methyl-13-hydroxynorjavanicin after another hydroxylation step at C-13. Both steps are most likely also accomplished by FSR3. No enzymatic function has been determined so far for either FSR4 and FSR5. Their deletion does not alter the product spectrum, but the possibility that they catalyze specific enzymatic steps during perithecium development cannot be ruled out. FSR4 might possess a regulatory function in the biosynthesis of fusarubins. This is Trans-enoyl reductase fsr4 from Gibberella fujikuroi (strain CBS 195.34 / IMI 58289 / NRRL A-6831) (Bakanae and foot rot disease fungus).